Reading from the N-terminus, the 208-residue chain is Cysteine-rich protein 2 (208 aa).

Positions C5–C57 constitute an LIM zinc-binding 1 domain. At K23 the chain carries N6-acetyllysine. Positions A98–F119 are disordered. S104 carries the post-translational modification Phosphoserine. The LIM zinc-binding 2 domain maps to C126–C178. N6-acetyllysine is present on residues K138 and K144.

In terms of assembly, interacts with TGFB1I1.

The sequence is that of Cysteine-rich protein 2 (CRIP2) from Pongo abelii (Sumatran orangutan).